The chain runs to 343 residues: Cyclic AMP-AMP-AMP synthase (343 aa).

It belongs to the CD-NTase family. D01 subfamily. The cofactor is Mg(2+).

It carries out the reaction 3 ATP = 2',3',3'-c-tri-AMP + 3 diphosphate. In terms of biological role, cyclic nucleotide synthase (second messenger synthase) of a CBASS antivirus system. CBASS (cyclic oligonucleotide-based antiphage signaling system) provides immunity against bacteriophage. The CD-NTase protein synthesizes cyclic nucleotides in response to infection; these serve as specific second messenger signals. The signals activate a diverse range of effectors, leading to bacterial cell death and thus abortive phage infection. A type II-C(AAAA) CBASS system. Its function is as follows. Cyclic trinucleotide synthase that catalyzes the synthesis of 2',3',3'-cyclic AMP-AMP-AMP (2',3',3'-c-tri-AMP or 2'3'3'-cAAA) as the major product, as well as another cyclic AMP(4) 2'-5'-linked minor product that acts as a second messenger for cell signal transduction. In Acinetobacter sp. (strain ATCC 27244 / 9458), this protein is Cyclic AMP-AMP-AMP synthase.